The chain runs to 148 residues: D-aminoacyl-tRNA deacylase (148 aa).

The short motif at 137–138 is the Gly-cisPro motif, important for rejection of L-amino acids element; sequence GP.

This sequence belongs to the DTD family. In terms of assembly, homodimer.

The protein localises to the cytoplasm. It carries out the reaction glycyl-tRNA(Ala) + H2O = tRNA(Ala) + glycine + H(+). The enzyme catalyses a D-aminoacyl-tRNA + H2O = a tRNA + a D-alpha-amino acid + H(+). An aminoacyl-tRNA editing enzyme that deacylates mischarged D-aminoacyl-tRNAs. Also deacylates mischarged glycyl-tRNA(Ala), protecting cells against glycine mischarging by AlaRS. Acts via tRNA-based rather than protein-based catalysis; rejects L-amino acids rather than detecting D-amino acids in the active site. By recycling D-aminoacyl-tRNA to D-amino acids and free tRNA molecules, this enzyme counteracts the toxicity associated with the formation of D-aminoacyl-tRNA entities in vivo and helps enforce protein L-homochirality. This is D-aminoacyl-tRNA deacylase from Latilactobacillus sakei subsp. sakei (strain 23K) (Lactobacillus sakei subsp. sakei).